Consider the following 221-residue polypeptide: GTP cyclohydrolase-2 (221 aa).

63-67 (RLHSE) lines the GTP pocket. Zn(2+)-binding residues include Cys68, Cys79, and Cys81. Residues Gln84, 107-109 (EGR), and Thr129 contribute to the GTP site. The active-site Proton acceptor is Asp141. Arg143 (nucleophile) is an active-site residue. The GTP site is built by Ser164 and Lys169.

It belongs to the GTP cyclohydrolase II family. Zn(2+) is required as a cofactor.

The catalysed reaction is GTP + 4 H2O = 2,5-diamino-6-hydroxy-4-(5-phosphoribosylamino)-pyrimidine + formate + 2 phosphate + 3 H(+). Its pathway is cofactor biosynthesis; riboflavin biosynthesis; 5-amino-6-(D-ribitylamino)uracil from GTP: step 1/4. Catalyzes the conversion of GTP to 2,5-diamino-6-ribosylamino-4(3H)-pyrimidinone 5'-phosphate (DARP), formate and pyrophosphate. This is GTP cyclohydrolase-2 from Streptomyces coelicolor (strain ATCC BAA-471 / A3(2) / M145).